The following is a 1411-amino-acid chain: DNA-directed RNA polymerase subunit beta' (1411 aa).

Residues Cys70, Cys72, Cys85, and Cys88 each coordinate Zn(2+). Asp460, Asp462, and Asp464 together coordinate Mg(2+). Residues Cys814, Cys888, Cys895, and Cys898 each contribute to the Zn(2+) site.

It belongs to the RNA polymerase beta' chain family. The RNAP catalytic core consists of 2 alpha, 1 beta, 1 beta' and 1 omega subunit. When a sigma factor is associated with the core the holoenzyme is formed, which can initiate transcription. The cofactor is Mg(2+). Zn(2+) is required as a cofactor.

It carries out the reaction RNA(n) + a ribonucleoside 5'-triphosphate = RNA(n+1) + diphosphate. Its function is as follows. DNA-dependent RNA polymerase catalyzes the transcription of DNA into RNA using the four ribonucleoside triphosphates as substrates. The sequence is that of DNA-directed RNA polymerase subunit beta' from Idiomarina loihiensis (strain ATCC BAA-735 / DSM 15497 / L2-TR).